We begin with the raw amino-acid sequence, 919 residues long: MFS-type transporter clz9 (919 aa).

Residues 1 to 11 are compositionally biased toward polar residues; that stretch reads MAASTKPTTKL. Residues 1–33 are disordered; sequence MAASTKPTTKLSTEEDDVSRRDSESSADFMKSN. A helical membrane pass occupies residues 69–89; sequence VVASFAAAISPFSTSTYYPVV. The N-linked (GlcNAc...) asparagine glycan is linked to Asn104. 3 consecutive transmembrane segments (helical) span residues 132–152, 192–212, and 222–242; these read PMFLVCFVTYFVANVGLALQN, LIYATLGSTLGPFIGPVIGGL, and VFWFLLCMGTVFALLIFIFFG. The N-linked (GlcNAc...) asparagine glycan is linked to Asn260. Helical transmembrane passes span 303–323, 333–353, 393–413, and 418–438; these read FILSVSGGLLYAGYSSVTSVL, YDAVQVGLCYLPVGFGSLLAY, LGFVFPMILVCSGLLVAYGWQ, and APLAPILVTMFLIAIILTGVM. An N-linked (GlcNAc...) asparagine glycan is attached at Asn461. Residues 465-485 form a helical membrane-spanning segment; the sequence is LLLGAGAVAVVGPLNKSAGIG. The DDE-1 domain maps to 641-809; it reads REWVTLIQGI…FTSANICSSF (169 aa). The segment at 840–897 is disordered; that stretch reads EAPWEAKTPSNRKKKQIQKRGTLTKGEGEDTLAQKEADQQIEREQRQGGEQSGRSRQA. A compositionally biased stretch (basic and acidic residues) spans 865–886; that stretch reads GEGEDTLAQKEADQQIEREQRQ. Residues 887–896 show a composition bias toward low complexity; that stretch reads GGEQSGRSRQ. Asn915 is a glycosylation site (N-linked (GlcNAc...) asparagine).

This sequence belongs to the major facilitator superfamily. CAR1 family.

It localises to the membrane. MFS-type transporter; part of the gene cluster that mediates the biosynthesis of squalestatin S1 (SQS1, also known as zaragozic acid A), a heavily oxidized fungal polyketide that offers potent cholesterol lowering activity by targeting squalene synthase (SS). The protein is MFS-type transporter clz9 of Cochliobolus lunatus (Filamentous fungus).